Here is a 298-residue protein sequence, read N- to C-terminus: Tyrosine recombinase XerC (298 aa).

Residues 1–84 (MNHIQEAFLN…TLRTFYEYWM (84 aa)) enclose the Core-binding (CB) domain. The 182-residue stretch at 105–286 (YLPQFFYEEE…SNQQLRKVYL (182 aa)) folds into the Tyr recombinase domain. Residues arginine 145, lysine 169, histidine 238, arginine 241, and histidine 264 contribute to the active site. The active-site O-(3'-phospho-DNA)-tyrosine intermediate is tyrosine 273.

This sequence belongs to the 'phage' integrase family. XerC subfamily. As to quaternary structure, forms a cyclic heterotetrameric complex composed of two molecules of XerC and two molecules of XerD.

The protein resides in the cytoplasm. Site-specific tyrosine recombinase, which acts by catalyzing the cutting and rejoining of the recombining DNA molecules. The XerC-XerD complex is essential to convert dimers of the bacterial chromosome into monomers to permit their segregation at cell division. It also contributes to the segregational stability of plasmids. This Staphylococcus aureus (strain MRSA252) protein is Tyrosine recombinase XerC.